A 741-amino-acid polypeptide reads, in one-letter code: uncharacterized protein (741 aa).

A signal peptide spans 1 to 18 (MKTISILAFLVLARLIEA). Disordered stretches follow at residues 142–300 (PKVE…GNVD), 423–528 (EEDE…SEQG), and 646–681 (ETVAPDTNSPDADQEQPDSVEPDNETTDAPINVEDD). The span at 147–165 (EEEEEEYDGEEDDDDESLT) shows a compositional bias: acidic residues. Low complexity-rich tracts occupy residues 183–197 (VEPSTTTESAISTTE) and 205–266 (STTV…SSTT). N-linked (GlcNAc...) asparagine glycosylation is found at Asn-232 and Asn-241. Acidic residues predominate over residues 423–432 (EEDEIDETET). Low complexity predominate over residues 433–451 (TESTKTTETTKTTGPAETT). N-linked (GlcNAc...) asparagine glycans are attached at residues Asn-461 and Asn-511. The segment covering 500–511 (PIDESTESEEPN) has biased composition (acidic residues). Positions 512–528 (ESVTVTGDTTTDTSEQG) are enriched in low complexity. Polar residues predominate over residues 646 to 656 (ETVAPDTNSPD). The segment covering 657–671 (ADQEQPDSVEPDNET) has biased composition (acidic residues). N-linked (GlcNAc...) asparagine glycosylation is present at Asn-669. Asn-719 carries GPI-anchor amidated asparagine lipidation. Residues 720–741 (AANLAGSISLSSGVLLLILMLI) constitute a propeptide, removed in mature form.

The protein localises to the cell membrane. This is an uncharacterized protein from Candida albicans (strain SC5314 / ATCC MYA-2876) (Yeast).